Consider the following 341-residue polypeptide: UDP-3-O-acylglucosamine N-acyltransferase (341 aa).

His-242 serves as the catalytic Proton acceptor.

This sequence belongs to the transferase hexapeptide repeat family. LpxD subfamily. As to quaternary structure, homotrimer.

It carries out the reaction a UDP-3-O-[(3R)-3-hydroxyacyl]-alpha-D-glucosamine + a (3R)-hydroxyacyl-[ACP] = a UDP-2-N,3-O-bis[(3R)-3-hydroxyacyl]-alpha-D-glucosamine + holo-[ACP] + H(+). The protein operates within bacterial outer membrane biogenesis; LPS lipid A biosynthesis. Its function is as follows. Catalyzes the N-acylation of UDP-3-O-acylglucosamine using 3-hydroxyacyl-ACP as the acyl donor. Is involved in the biosynthesis of lipid A, a phosphorylated glycolipid that anchors the lipopolysaccharide to the outer membrane of the cell. In Haemophilus influenzae (strain 86-028NP), this protein is UDP-3-O-acylglucosamine N-acyltransferase.